Consider the following 391-residue polypeptide: Serpin B13 (391 aa).

The protein belongs to the serpin family. Ov-serpin subfamily. In terms of tissue distribution, skin specific.

It is found in the cytoplasm. May play a role in the proliferation or differentiation of keratinocytes. The sequence is that of Serpin B13 (SERPINB13) from Homo sapiens (Human).